Consider the following 259-residue polypeptide: NH(3)-dependent NAD(+) synthetase (259 aa).

Residue 33-40 (GLSGGIDS) participates in ATP binding. A Mg(2+)-binding site is contributed by Asp-39. Arg-119 serves as a coordination point for deamido-NAD(+). Thr-139 is a binding site for ATP. Glu-144 provides a ligand contact to Mg(2+). Residues Lys-152 and Asp-159 each contribute to the deamido-NAD(+) site. The ATP site is built by Lys-168 and Ser-190. A deamido-NAD(+)-binding site is contributed by 249-250 (HK).

Belongs to the NAD synthetase family. In terms of assembly, homodimer.

It catalyses the reaction deamido-NAD(+) + NH4(+) + ATP = AMP + diphosphate + NAD(+) + H(+). Its pathway is cofactor biosynthesis; NAD(+) biosynthesis; NAD(+) from deamido-NAD(+) (ammonia route): step 1/1. Functionally, catalyzes the ATP-dependent amidation of deamido-NAD to form NAD. Uses ammonia as a nitrogen source. The polypeptide is NH(3)-dependent NAD(+) synthetase (Methanocaldococcus jannaschii (strain ATCC 43067 / DSM 2661 / JAL-1 / JCM 10045 / NBRC 100440) (Methanococcus jannaschii)).